Reading from the N-terminus, the 249-residue chain is DNA repair protein RecO (249 aa).

This sequence belongs to the RecO family.

In terms of biological role, involved in DNA repair and RecF pathway recombination. This Sinorhizobium medicae (strain WSM419) (Ensifer medicae) protein is DNA repair protein RecO.